The primary structure comprises 227 residues: 7-cyano-7-deazaguanine synthase (227 aa).

7–17 (LSGGMDSLVTT) is an ATP binding site. Zn(2+)-binding residues include C187, C195, C198, and C201.

Belongs to the QueC family. Requires Zn(2+) as cofactor.

The catalysed reaction is 7-carboxy-7-deazaguanine + NH4(+) + ATP = 7-cyano-7-deazaguanine + ADP + phosphate + H2O + H(+). The protein operates within purine metabolism; 7-cyano-7-deazaguanine biosynthesis. Functionally, catalyzes the ATP-dependent conversion of 7-carboxy-7-deazaguanine (CDG) to 7-cyano-7-deazaguanine (preQ(0)). This is 7-cyano-7-deazaguanine synthase from Chlorobium phaeovibrioides (strain DSM 265 / 1930) (Prosthecochloris vibrioformis (strain DSM 265)).